A 218-amino-acid chain; its full sequence is ER lumen protein-retaining receptor (218 aa).

The Lumenal portion of the chain corresponds to 1-2 (MN). Residues 3–23 (LFSFLGDMLHLGSMLILLFKI) traverse the membrane as a helical segment. Residues 24–57 (KNDKSCAGVSLKSQILFTIVFTARYLDLFTNYVS) lie on the Cytoplasmic side of the membrane. Residues 58–78 (LYITFMKITYIAVSYYTLHLI) form a helical membrane-spanning segment. Over 79 to 94 (ARKYKFTYDKDHDTFK) the chain is Lumenal. The chain crosses the membrane as a helical span at residues 95–115 (IVYLIASCAILSLITYDKTTI). Topologically, residues 116–123 (GIYSTFLE) are cytoplasmic. A helical membrane pass occupies residues 124–144 (ILWTFSIYLESIAILPQLILL). Residues 145–152 (QRTGEVEA) are Lumenal-facing. The chain crosses the membrane as a helical span at residues 153–173 (LTSNYIVLLGGYRAFYLFNWI). The Cytoplasmic segment spans residues 174-184 (YRITFYNWSGK). Residues 185–205 (IEMLSGLLQTILYADFFYYYA) form a helical membrane-spanning segment. Residues 206 to 218 (KSRMYGKKLVLPQ) lie on the Lumenal side of the membrane.

The protein belongs to the ERD2 family.

It localises to the endoplasmic reticulum membrane. Its function is as follows. Required for the retention of luminal endoplasmic reticulum proteins. Determines the specificity of the luminal ER protein retention system. Also required for normal vesicular traffic through the Golgi. The chain is ER lumen protein-retaining receptor (kdelr) from Dictyostelium discoideum (Social amoeba).